The chain runs to 187 residues: Ribosome-recycling factor (187 aa).

It belongs to the RRF family.

It localises to the cytoplasm. Functionally, responsible for the release of ribosomes from messenger RNA at the termination of protein biosynthesis. May increase the efficiency of translation by recycling ribosomes from one round of translation to another. The sequence is that of Ribosome-recycling factor from Methylobacterium sp. (strain 4-46).